Reading from the N-terminus, the 129-residue chain is Large ribosomal subunit protein bL20 (129 aa).

The span at 1–17 (MARVKRSVNAHKKRRSV) shows a compositional bias: basic residues. The tract at residues 1–29 (MARVKRSVNAHKKRRSVLKASKGYRGQRS) is disordered.

It belongs to the bacterial ribosomal protein bL20 family.

In terms of biological role, binds directly to 23S ribosomal RNA and is necessary for the in vitro assembly process of the 50S ribosomal subunit. It is not involved in the protein synthesizing functions of that subunit. The chain is Large ribosomal subunit protein bL20 from Mycobacterium ulcerans (strain Agy99).